Reading from the N-terminus, the 105-residue chain is Nitrogen fixation nifHD2 region GlnB-like protein 1 (105 aa).

Belongs to the P(II) protein family.

Could be involved in the regulation of nitrogen fixation. The protein is Nitrogen fixation nifHD2 region GlnB-like protein 1 of Methanosarcina barkeri.